A 103-amino-acid chain; its full sequence is MNQGNPPPYPGPGPTAPYPPYPSQPMGPGFYPPGPPGGPYPPPQGGYPYQGYPQYGWQGGPQEPPKTTVYVVEDQRRDDLGTSTCLTACWTALCCCCLWDMLT.

Over residues 1 to 45 the composition is skewed to pro residues; it reads MNQGNPPPYPGPGPTAPYPPYPSQPMGPGFYPPGPPGGPYPPPQG. The segment at 1–66 is disordered; sequence MNQGNPPPYP…WQGGPQEPPK (66 aa). Over residues 46 to 56 the composition is skewed to low complexity; sequence GYPYQGYPQYG. A helical membrane pass occupies residues 80 to 97; sequence LGTSTCLTACWTALCCCC.

This sequence belongs to the CYSTM1 family.

It is found in the membrane. This Bos taurus (Bovine) protein is Cysteine-rich and transmembrane domain-containing protein 1 (CYSTM1).